A 350-amino-acid chain; its full sequence is Type II restriction enzyme NgoBI (350 aa).

The enzyme catalyses Endonucleolytic cleavage of DNA to give specific double-stranded fragments with terminal 5'-phosphates.. A P subtype restriction enzyme that recognizes the double-stranded sequence 5'-RGCGCY-3'; the cleavage site is unknown. This is Type II restriction enzyme NgoBI (ngoBIR) from Neisseria gonorrhoeae.